The chain runs to 261 residues: DNA repair protein RecO (261 aa).

The protein belongs to the RecO family.

Functionally, involved in DNA repair and RecF pathway recombination. This Limosilactobacillus reuteri (strain DSM 20016) (Lactobacillus reuteri) protein is DNA repair protein RecO.